The sequence spans 236 residues: Small ribosomal subunit protein uS2c (236 aa).

The protein belongs to the universal ribosomal protein uS2 family.

Its subcellular location is the plastid. The protein resides in the chloroplast. The chain is Small ribosomal subunit protein uS2c (rps2) from Piper cenocladum (Ant piper).